The sequence spans 341 residues: Putative UPF0607 protein ENSP00000383144 (341 aa).

Disordered regions lie at residues 70-131 (RLPK…NPRP) and 218-279 (LMVG…PPAK). Residues 72–101 (PKTEVRAEEPKEATEVKDQVETQEQEDNKR) are compositionally biased toward basic and acidic residues. Polar residues predominate over residues 108 to 127 (EAASTSRPLETQGNLTSSWY). Residues 243 to 252 (AGHRSHKRKL) are compositionally biased toward basic residues.

The protein belongs to the UPF0607 family.

The sequence is that of Putative UPF0607 protein ENSP00000383144 from Homo sapiens (Human).